The following is a 49-amino-acid chain: Light-harvesting protein B-875 beta chain (49 aa).

At 2–27 (ADKSDLGYTGLTDEQAQELHSVYMSG) the chain is on the cytoplasmic side. A bacteriochlorophyll is bound by residues His21 and His39. The chain crosses the membrane as a helical; Signal-anchor for type II membrane protein span at residues 28-45 (LWPFSAVAIVAHLAVYIW). At 46-49 (RPWF) the chain is on the periplasmic side.

The protein belongs to the antenna complex beta subunit family. The core complex is formed by different alpha and beta chains, binding bacteriochlorophyll molecules, and arranged most probably in tetrameric structures disposed around the reaction center. The non-pigmented gamma chains may constitute additional components.

Its subcellular location is the cell inner membrane. Antenna complexes are light-harvesting systems, which transfer the excitation energy to the reaction centers. The chain is Light-harvesting protein B-875 beta chain (pufB) from Cereibacter sphaeroides (Rhodobacter sphaeroides).